The primary structure comprises 432 residues: uncharacterized protein (432 aa).

The 210-residue stretch at 223 to 432 (ASAVRGEALF…KDLIEYLKTR (210 aa)) folds into the Cytochrome c domain. The heme c site is built by Cys-236, Cys-239, and His-240.

This is an uncharacterized protein from Sinorhizobium fredii (strain NBRC 101917 / NGR234).